The following is an 861-amino-acid chain: Homeobox-leucine zipper protein HOX29 (861 aa).

The segment at residues 2-65 is a DNA-binding region (homeobox); sequence DASKYVRYTP…NRRCREKQRK (64 aa). Residues 57–99 are a coiled coil; sequence RRCREKQRKESSRLQALNRKLTAMNKLLMEENDRLQKQVSQLV. Residues 162-390 enclose the START domain; the sequence is RDASPAGLMS…VAHEDTRSVI (229 aa).

It belongs to the HD-ZIP homeobox family. Class III subfamily. Expressed in roots, stems and leaf blades.

The protein resides in the nucleus. In terms of biological role, probable transcription factor. In Oryza sativa subsp. indica (Rice), this protein is Homeobox-leucine zipper protein HOX29 (HOX29).